We begin with the raw amino-acid sequence, 360 residues long: MTITFTLPPHQTALTVDEHDKVTIWDVAPCPSLPPDQVCVRVEAVALNPSDTKMRGQFATPYAFLGTDYAGTVVAVGSQVTHIQVGDRVYGAQNEMCPRTPDQGAFSQYTVTRGRIWATVPEGWSFEQAASLPAGISTAGLAMKLLGLPLPDPNATTAPALPKPVYVLVYGGSTATATIVMQMLRLSGYIPIATCSPHNFDLAKKHGAEDVFDYRDAGLAQTIRTYTKNNLRYALDCITNVESTTLCFAAIGRAGGRYVSLNPFPEHAATRKMVTADWTLGPTIFGEGSTWPAPYGRPGSEKDRAFGEELWRVAARLVEDGKIVHHPLRVIPGGFEAIKQGMELVRTGQLSGEKVVVKLG.

50-53 is an NADP(+) binding site; it reads SDTK. 134 to 141 serves as a coordination point for substrate; sequence AGISTAGL. Residues 173-176, 196-199, Tyr214, 261-262, and Thr279 each bind NADP(+); these read STAT, SPHN, and LN. Position 281-285 (281-285) interacts with substrate; it reads GPTIF. 350 to 351 contributes to the NADP(+) binding site; sequence LS.

The protein belongs to the zinc-containing alcohol dehydrogenase family. Monomer.

The protein operates within polyketide biosynthesis; lovastatin biosynthesis. Dehydrogenase; part of the gene cluster that mediates the biosynthesis of monakolin K, also known as lovastatin, and which acts as a potent competitive inhibitor of HMG-CoA reductase. Monakolin K biosynthesis is performed in two stages. The first stage is catalyzed by the nonaketide synthase mokA, which belongs to type I polyketide synthases and catalyzes the iterative nine-step formation of the polyketide. This PKS stage is completed by the action of dehydrogenase mokE, which catalyzes the NADPH-dependent reduction of the unsaturated tetra-, penta- and heptaketide intermediates that arise during the mokA-mediated biosynthesis of the nonaketide chain and leads to dihydromonacolin L. Covalently bound dihydromonacolin L is released from mokA by the mokD esterase. Conversion of dihydromonacolin L into monacolin L and then monacolin J is subsequently performed with the participation of molecular oxygen and P450 monoogygenase mokC. Finally, mokF performs the conversion of monacoline J to monacoline K through the addition of the side-chain diketide moiety (2R)-2-methylbutanoate produced by the diketide synthase mokB. The polypeptide is Dehydrogenase mokE (Monascus pilosus (Red mold)).